The primary structure comprises 339 residues: MRVYYDRDADLNLIKAKKVAVIGYGSQGRAHALNLKDSGAQNVVIALKAGSPTVKKAEADGFKVMTVAEAAAWADLMMMATPDELQADIYKADIAGNIRDGAAIAFAHGLNVHFGLIEPKASVDVVMIAPKGPGHTVRGEYQKGGGVPCLVAVHQNASGNALELALSYACGVGGGRSGIIETNFREECETDLFGEQVVLCGGLVELIRAGFETLTEAGYAPEMAYFECLHEVKLIVDLIYEGGIANMNYSISNTAEWGEYVSGPRIITAETKAEMKRVLKDIQTGKFTSDWMQEYRAGGSRFKGIRRLNDSHPIEEVGAKLRGMMPWIGKNKLVDKSVN.

The region spanning Met-1–Thr-182 is the KARI N-terminal Rossmann domain. Residues Tyr-24–Gln-27, Lys-48, Ser-51, Thr-53, and Asp-83–Gln-86 contribute to the NADP(+) site. The active site involves His-108. Gly-134 provides a ligand contact to NADP(+). The KARI C-terminal knotted domain maps to Asn-183–Ile-328. Mg(2+) is bound by residues Asp-191, Glu-195, Glu-227, and Glu-231. A substrate-binding site is contributed by Ser-252.

It belongs to the ketol-acid reductoisomerase family. Mg(2+) is required as a cofactor.

It carries out the reaction (2R)-2,3-dihydroxy-3-methylbutanoate + NADP(+) = (2S)-2-acetolactate + NADPH + H(+). The enzyme catalyses (2R,3R)-2,3-dihydroxy-3-methylpentanoate + NADP(+) = (S)-2-ethyl-2-hydroxy-3-oxobutanoate + NADPH + H(+). The protein operates within amino-acid biosynthesis; L-isoleucine biosynthesis; L-isoleucine from 2-oxobutanoate: step 2/4. Its pathway is amino-acid biosynthesis; L-valine biosynthesis; L-valine from pyruvate: step 2/4. Its function is as follows. Involved in the biosynthesis of branched-chain amino acids (BCAA). Catalyzes an alkyl-migration followed by a ketol-acid reduction of (S)-2-acetolactate (S2AL) to yield (R)-2,3-dihydroxy-isovalerate. In the isomerase reaction, S2AL is rearranged via a Mg-dependent methyl migration to produce 3-hydroxy-3-methyl-2-ketobutyrate (HMKB). In the reductase reaction, this 2-ketoacid undergoes a metal-dependent reduction by NADPH to yield (R)-2,3-dihydroxy-isovalerate. The polypeptide is Ketol-acid reductoisomerase (NADP(+)) (Rhizobium johnstonii (strain DSM 114642 / LMG 32736 / 3841) (Rhizobium leguminosarum bv. viciae)).